The following is a 308-amino-acid chain: Homoserine O-acetyltransferase (308 aa).

Residue cysteine 142 is the Acyl-thioester intermediate of the active site. Residues lysine 163 and serine 192 each contribute to the substrate site. Histidine 235 serves as the catalytic Proton acceptor. Glutamate 237 is a catalytic residue. Substrate is bound at residue arginine 249.

It belongs to the MetA family.

It is found in the cytoplasm. It carries out the reaction L-homoserine + acetyl-CoA = O-acetyl-L-homoserine + CoA. It functions in the pathway amino-acid biosynthesis; L-methionine biosynthesis via de novo pathway; O-acetyl-L-homoserine from L-homoserine: step 1/1. Transfers an acetyl group from acetyl-CoA to L-homoserine, forming acetyl-L-homoserine. The polypeptide is Homoserine O-acetyltransferase (Rhizobium rhizogenes (strain K84 / ATCC BAA-868) (Agrobacterium radiobacter)).